A 376-amino-acid polypeptide reads, in one-letter code: UDP-N-acetylglucosamine--N-acetylmuramyl-(pentapeptide) pyrophosphoryl-undecaprenol N-acetylglucosamine transferase (376 aa).

UDP-N-acetyl-alpha-D-glucosamine-binding positions include 11 to 13, asparagine 117, arginine 160, serine 208, and glutamine 310; that span reads TGG.

It belongs to the glycosyltransferase 28 family. MurG subfamily.

The protein localises to the cell inner membrane. It carries out the reaction di-trans,octa-cis-undecaprenyl diphospho-N-acetyl-alpha-D-muramoyl-L-alanyl-D-glutamyl-meso-2,6-diaminopimeloyl-D-alanyl-D-alanine + UDP-N-acetyl-alpha-D-glucosamine = di-trans,octa-cis-undecaprenyl diphospho-[N-acetyl-alpha-D-glucosaminyl-(1-&gt;4)]-N-acetyl-alpha-D-muramoyl-L-alanyl-D-glutamyl-meso-2,6-diaminopimeloyl-D-alanyl-D-alanine + UDP + H(+). It participates in cell wall biogenesis; peptidoglycan biosynthesis. In terms of biological role, cell wall formation. Catalyzes the transfer of a GlcNAc subunit on undecaprenyl-pyrophosphoryl-MurNAc-pentapeptide (lipid intermediate I) to form undecaprenyl-pyrophosphoryl-MurNAc-(pentapeptide)GlcNAc (lipid intermediate II). The protein is UDP-N-acetylglucosamine--N-acetylmuramyl-(pentapeptide) pyrophosphoryl-undecaprenol N-acetylglucosamine transferase of Rickettsia peacockii (strain Rustic).